Here is a 143-residue protein sequence, read N- to C-terminus: Hemoglobin subunit alpha-2 (143 aa).

N-acetylserine is present on Ser-2. Positions 2–143 (SLSSKDKATV…LALALSEKYR (142 aa)) constitute a Globin domain. His-60 lines the O2 pocket. His-89 provides a ligand contact to heme b.

This sequence belongs to the globin family. As to quaternary structure, hb 2 is a heterotetramer of two alpha-2 and two beta-1 chains. Hb 3 is a heterotetramer of two alpha-2 and two beta-2 chains. Red blood cells.

Its function is as follows. Involved in oxygen transport from gills to the various peripheral tissues. The sequence is that of Hemoglobin subunit alpha-2 (hba2) from Arctogadus glacialis (Arctic cod).